Here is a 146-residue protein sequence, read N- to C-terminus: Snaclec stejaggregin-B subunit beta-1 (146 aa).

The first 23 residues, 1–23 (MGRFIFVSFGLLVVFLSLSGTGA), serve as a signal peptide directing secretion. Intrachain disulfides connect C25–C36, C53–C142, and C119–C134. The C-type lectin domain occupies 32 to 143 (YDLYCYRVFQ…CSQTYPFVCK (112 aa)).

Belongs to the snaclec family. In terms of assembly, heteromultimer; disulfide-linked. As to expression, expressed by the venom gland.

It is found in the secreted. Functionally, interferes with one step of hemostasis (modulation of platelet aggregation, or coagulation cascade, for example). The chain is Snaclec stejaggregin-B subunit beta-1 from Trimeresurus stejnegeri (Chinese green tree viper).